The sequence spans 369 residues: Nuclear pore complex-interacting protein family member A6 (369 aa).

Positions 151–170 (SMKEREHGEKERQVSEAEEN) are disordered.

This sequence belongs to the NPIP family.

The polypeptide is Nuclear pore complex-interacting protein family member A6 (Homo sapiens (Human)).